The primary structure comprises 498 residues: Ammonium transporter 3 member 1 (498 aa).

A run of 11 helical transmembrane segments spans residues 33–53 (ISAT…YGSI), 58–78 (WAVN…LCWV), 143–163 (MVYF…GSLL), 171–191 (WMLF…FSLW), 206–226 (GGYV…YWVG), 241–261 (VLLM…FNGG), 276–296 (NTNI…VIFF), 301–321 (VIGA…GAGL), 325–345 (WAAI…MMVV), 369–389 (GFLG…SLFL), and 412–432 (VAGA…VCLA). The interval 478–498 (DNNDTHHNNNKAAPSGVTQNV) is disordered. Positions 487–498 (NKAAPSGVTQNV) are enriched in polar residues.

It belongs to the ammonia transporter channel (TC 1.A.11.2) family. Expressed in root.

The protein resides in the membrane. Functionally, involved in ammonium transport. This is Ammonium transporter 3 member 1 (AMT3-1) from Oryza sativa subsp. japonica (Rice).